Reading from the N-terminus, the 314-residue chain is Tyrosine recombinase XerC (314 aa).

Residues Met-1–Thr-85 form the Core-binding (CB) domain. In terms of domain architecture, Tyr recombinase spans Asp-106 to Ala-291. Residues Arg-147, Lys-171, His-243, Arg-246, and His-269 contribute to the active site. Tyr-278 (O-(3'-phospho-DNA)-tyrosine intermediate) is an active-site residue. Residues Glu-284–Lys-314 are disordered. The segment covering Gly-302–Lys-314 has biased composition (basic and acidic residues).

Belongs to the 'phage' integrase family. XerC subfamily. Forms a cyclic heterotetrameric complex composed of two molecules of XerC and two molecules of XerD.

It localises to the cytoplasm. In terms of biological role, site-specific tyrosine recombinase, which acts by catalyzing the cutting and rejoining of the recombining DNA molecules. The XerC-XerD complex is essential to convert dimers of the bacterial chromosome into monomers to permit their segregation at cell division. It also contributes to the segregational stability of plasmids. This chain is Tyrosine recombinase XerC, found in Roseiflexus castenholzii (strain DSM 13941 / HLO8).